We begin with the raw amino-acid sequence, 215 residues long: Pyrrolidone-carboxylate peptidase (215 aa).

Catalysis depends on residues Glu-78, Cys-141, and His-165.

The protein belongs to the peptidase C15 family. As to quaternary structure, homotetramer.

The protein localises to the cytoplasm. It catalyses the reaction Release of an N-terminal pyroglutamyl group from a polypeptide, the second amino acid generally not being Pro.. In terms of biological role, removes 5-oxoproline from various penultimate amino acid residues except L-proline. The protein is Pyrrolidone-carboxylate peptidase of Streptococcus suis (strain 98HAH33).